Reading from the N-terminus, the 356-residue chain is Cytochrome c oxidase subunit 2 (356 aa).

The first 23 residues, 1–23 (MNKGLCNWRLFSLFGMMALLLAG), serve as a signal peptide directing secretion. Residues 24–259 (CGKPFLSTLQ…QNAKKPVVTD (236 aa)) are cytochrome c oxidase subunit II. 2 helical membrane passes run 45–65 (LMLLSTSIMVLVIVVVAIIFV) and 93–113 (IIWTVIPIILLLILAVPTVLT). 4 residues coordinate Cu cation: histidine 178, cysteine 219, cysteine 223, and histidine 227. In terms of domain architecture, Cytochrome c spans 260-356 (PVAKEGEAIF…TKYLMSLKVE (97 aa)). Heme c-binding residues include cysteine 273, cysteine 276, histidine 277, and methionine 331.

Belongs to the cytochrome c oxidase subunit 2 family. Cu cation is required as a cofactor. The cofactor is heme c.

The protein resides in the cell membrane. The enzyme catalyses 4 Fe(II)-[cytochrome c] + O2 + 8 H(+)(in) = 4 Fe(III)-[cytochrome c] + 2 H2O + 4 H(+)(out). Subunits I and II form the functional core of the enzyme complex. Electrons originating in cytochrome c are transferred via heme a and Cu(A) to the binuclear center formed by heme a3 and Cu(B). In Bacillus sp. (strain PS3), this protein is Cytochrome c oxidase subunit 2 (ctaC).